The primary structure comprises 295 residues: Histamine N-methyltransferase (295 aa).

Glu28 is a binding site for substrate. Gly60, Glu89, Gln94, Ser120, and Ile143 together coordinate S-adenosyl-L-methionine. Position 284 (Asn284) interacts with substrate.

It belongs to the class I-like SAM-binding methyltransferase superfamily. HNMT family. Monomer.

The protein resides in the cytoplasm. The catalysed reaction is histamine + S-adenosyl-L-methionine = N(tau)-methylhistamine + S-adenosyl-L-homocysteine + H(+). Its function is as follows. Inactivates histamine by N-methylation. Plays an important role in degrading histamine and in regulating the airway response to histamine. This chain is Histamine N-methyltransferase (Hnmt), found in Mus musculus (Mouse).